A 945-amino-acid polypeptide reads, in one-letter code: Collagen-like protein 1 (945 aa).

Disordered regions lie at residues 80 to 226 (SLKG…SPDL) and 257 to 441 (GEKG…DKGE). Collagen-like domains are found at residues 83–142 (GDPG…QGDK) and 146–205 (GDVG…KGDK). Basic and acidic residues-rich tracts occupy residues 109–145 (QGTKGEQGDQGEQGDKGDKGDKGDVGAKGDQGDKGDQ) and 168–208 (DQGD…KGDK). A glycan (N-linked (GlcNAc...) asparagine; by host) is linked at Asn211. Collagen-like domains are found at residues 257–376 (GEKG…KGDK), 383–442 (GDKG…KGEN), 488–547 (GEKG…VGDK), 554–613 (GDKG…KGDV), and 635–694 (GDKG…VGAS). N-linked (GlcNAc...) asparagine; by host glycosylation occurs at Asn442. Residues 488–687 (GEKGDKGDTG…DKGDKGDKGD (200 aa)) are compositionally biased toward basic and acidic residues. The disordered stretch occupies residues 488–712 (GEKGDKGDTG…SPTTGENGDS (225 aa)). The segment covering 703–712 (SPTTGENGDS) has biased composition (polar residues). A glycan (N-linked (GlcNAc...) asparagine; by host) is linked at Asn716. Positions 733-768 (TNIKGDKGDKGDKGDKGDKGDTGDVGLKGDTGTPGS) are disordered. Over residues 736-754 (KGDKGDKGDKGDKGDKGDT) the composition is skewed to basic and acidic residues. Over residues 756–765 (DVGLKGDTGT) the composition is skewed to low complexity.

In terms of processing, may be hydroxylated on lysine by the viral-encoded procollagen-lysine,2-oxoglutarate 5-dioxygenase.

The protein localises to the virion. May participate in the formation of a layer of cross-linked glycosylated fibrils at the viral surface thus giving it a hairy-like appearance. This is Collagen-like protein 1 from Acanthamoeba polyphaga mimivirus (APMV).